Reading from the N-terminus, the 427-residue chain is GTPase Obg (427 aa).

The region spanning 1–158 (MFVDKVKVYV…RDVILELKVL (158 aa)) is the Obg domain. The segment at 118 to 144 (KGGRGGRGNTRFATPANPAPELSENGE) is disordered. The OBG-type G domain maps to 159 to 329 (ADAGLVGFPS…LLRAIMDTIE (171 aa)). GTP-binding positions include 165–172 (GFPSVGKS), 190–194 (FTTIT), 212–215 (DLPG), 282–285 (NKMD), and 310–312 (SAL). S172 and T192 together coordinate Mg(2+). The OCT domain maps to 349–427 (KHDKEQDPFV…LLEFEFEFIE (79 aa)).

It belongs to the TRAFAC class OBG-HflX-like GTPase superfamily. OBG GTPase family. In terms of assembly, monomer. Requires Mg(2+) as cofactor.

It localises to the cytoplasm. Its function is as follows. An essential GTPase which binds GTP, GDP and possibly (p)ppGpp with moderate affinity, with high nucleotide exchange rates and a fairly low GTP hydrolysis rate. Plays a role in control of the cell cycle, stress response, ribosome biogenesis and in those bacteria that undergo differentiation, in morphogenesis control. The polypeptide is GTPase Obg (Halalkalibacterium halodurans (strain ATCC BAA-125 / DSM 18197 / FERM 7344 / JCM 9153 / C-125) (Bacillus halodurans)).